A 334-amino-acid polypeptide reads, in one-letter code: Cobalt-precorrin-5B C(1)-methyltransferase (334 aa).

This sequence belongs to the CbiD family.

It catalyses the reaction Co-precorrin-5B + S-adenosyl-L-methionine = Co-precorrin-6A + S-adenosyl-L-homocysteine. The protein operates within cofactor biosynthesis; adenosylcobalamin biosynthesis; cob(II)yrinate a,c-diamide from sirohydrochlorin (anaerobic route): step 6/10. Its function is as follows. Catalyzes the methylation of C-1 in cobalt-precorrin-5B to form cobalt-precorrin-6A. This chain is Cobalt-precorrin-5B C(1)-methyltransferase, found in Methanoregula boonei (strain DSM 21154 / JCM 14090 / 6A8).